A 259-amino-acid chain; its full sequence is Probable ABC transporter arginine-binding protein ArtJ (259 aa).

Positions 1–25 (MIKQIGRFFRAFIFIMPLSLTSCES) are cleaved as a signal peptide. Positions 38, 45, 96, 97, 99, 104, and 149 each coordinate L-arginine.

It belongs to the bacterial solute-binding protein 3 family.

It is found in the secreted. Its subcellular location is the cell surface. Its function is as follows. Probably part of an ABC transporter complex involved in arginine transport. Binds arginine. Interacts with host epithelial cells, suggesting a role in host-cell adhesion during infection. The chain is Probable ABC transporter arginine-binding protein ArtJ from Chlamydia pneumoniae (Chlamydophila pneumoniae).